A 253-amino-acid chain; its full sequence is Phosphate import ATP-binding protein PstB (253 aa).

One can recognise an ABC transporter domain in the interval 7–248 (IDARDVNFWY…PEKEATQNYI (242 aa)). 39 to 46 (GPSGCGKS) provides a ligand contact to ATP.

The protein belongs to the ABC transporter superfamily. Phosphate importer (TC 3.A.1.7) family. As to quaternary structure, the complex is composed of two ATP-binding proteins (PstB), two transmembrane proteins (PstC and PstA) and a solute-binding protein (PstS).

Its subcellular location is the cell inner membrane. It carries out the reaction phosphate(out) + ATP + H2O = ADP + 2 phosphate(in) + H(+). Functionally, part of the ABC transporter complex PstSACB involved in phosphate import. Responsible for energy coupling to the transport system. In Bacteroides fragilis (strain ATCC 25285 / DSM 2151 / CCUG 4856 / JCM 11019 / LMG 10263 / NCTC 9343 / Onslow / VPI 2553 / EN-2), this protein is Phosphate import ATP-binding protein PstB.